A 517-amino-acid polypeptide reads, in one-letter code: ATP synthase subunit alpha (517 aa).

Position 174 to 181 (174 to 181 (GDRQTGKT)) interacts with ATP.

This sequence belongs to the ATPase alpha/beta chains family. As to quaternary structure, F-type ATPases have 2 components, CF(1) - the catalytic core - and CF(0) - the membrane proton channel. CF(1) has five subunits: alpha(3), beta(3), gamma(1), delta(1), epsilon(1). CF(0) has four main subunits: a(1), b(1), b'(1) and c(9-12).

Its subcellular location is the cell inner membrane. The enzyme catalyses ATP + H2O + 4 H(+)(in) = ADP + phosphate + 5 H(+)(out). Produces ATP from ADP in the presence of a proton gradient across the membrane. The alpha chain is a regulatory subunit. The protein is ATP synthase subunit alpha of Methylibium petroleiphilum (strain ATCC BAA-1232 / LMG 22953 / PM1).